Here is a 420-residue protein sequence, read N- to C-terminus: LanC-like protein 3 (420 aa).

Belongs to the LanC-like protein family.

This chain is LanC-like protein 3 (LANCL3), found in Homo sapiens (Human).